We begin with the raw amino-acid sequence, 333 residues long: Protoheme IX farnesyltransferase (333 aa).

Transmembrane regions (helical) follow at residues 64–84 (LICT…LNCL), 110–130 (TVFL…ISGV), 133–153 (LAAG…TVIL), 161–181 (IVFG…AATG), 189–209 (WLFG…AILL), 246–266 (IMGV…LLPF), and 287–307 (AKSL…LLLI).

This sequence belongs to the UbiA prenyltransferase family. Protoheme IX farnesyltransferase subfamily.

The protein resides in the cell inner membrane. It carries out the reaction heme b + (2E,6E)-farnesyl diphosphate + H2O = Fe(II)-heme o + diphosphate. It functions in the pathway porphyrin-containing compound metabolism; heme O biosynthesis; heme O from protoheme: step 1/1. Functionally, converts heme B (protoheme IX) to heme O by substitution of the vinyl group on carbon 2 of heme B porphyrin ring with a hydroxyethyl farnesyl side group. The protein is Protoheme IX farnesyltransferase of Prochlorococcus marinus (strain MIT 9312).